Reading from the N-terminus, the 439-residue chain is Phosphoribosylamine--glycine ligase (439 aa).

In terms of domain architecture, ATP-grasp spans 109–317; the sequence is REFMERNKIP…LVEISERIID (209 aa). 136 to 195 is a binding site for ATP; it reads IDEFGKPVVVKPLGLTGGKGVKVVGYQLKDNEEAKEYAEYLIRKDGKVLIEERTDGVEFT. Mg(2+) contacts are provided by Gln-275, Glu-287, and Asn-289. Mn(2+)-binding residues include Gln-275, Glu-287, and Asn-289.

Belongs to the GARS family. Requires Mg(2+) as cofactor. Mn(2+) is required as a cofactor.

It catalyses the reaction 5-phospho-beta-D-ribosylamine + glycine + ATP = N(1)-(5-phospho-beta-D-ribosyl)glycinamide + ADP + phosphate + H(+). It functions in the pathway purine metabolism; IMP biosynthesis via de novo pathway; N(1)-(5-phospho-D-ribosyl)glycinamide from 5-phospho-alpha-D-ribose 1-diphosphate: step 2/2. The sequence is that of Phosphoribosylamine--glycine ligase from Pyrococcus furiosus (strain ATCC 43587 / DSM 3638 / JCM 8422 / Vc1).